The following is a 154-amino-acid chain: Ribonuclease HI (154 aa).

The 142-residue stretch at 1–142 (MTKHVEIFTD…CDELARTAAE (142 aa)) folds into the RNase H type-1 domain. Mg(2+) is bound by residues Asp-10, Glu-48, Asp-70, and Asp-134.

The protein belongs to the RNase H family. In terms of assembly, monomer. It depends on Mg(2+) as a cofactor.

It localises to the cytoplasm. The catalysed reaction is Endonucleolytic cleavage to 5'-phosphomonoester.. Functionally, endonuclease that specifically degrades the RNA of RNA-DNA hybrids. The polypeptide is Ribonuclease HI (Vibrio parahaemolyticus serotype O3:K6 (strain RIMD 2210633)).